The sequence spans 515 residues: 2-isopropylmalate synthase (515 aa).

The region spanning 4–266 (INIFDTTLRD…ETRLNLQEIK (263 aa)) is the Pyruvate carboxyltransferase domain. Mn(2+) contacts are provided by aspartate 13, histidine 201, histidine 203, and asparagine 237. The tract at residues 391–515 (QLSSLQVQYG…RAENQKVAMQ (125 aa)) is regulatory domain.

It belongs to the alpha-IPM synthase/homocitrate synthase family. LeuA type 1 subfamily. In terms of assembly, homodimer. Mn(2+) serves as cofactor.

Its subcellular location is the cytoplasm. It carries out the reaction 3-methyl-2-oxobutanoate + acetyl-CoA + H2O = (2S)-2-isopropylmalate + CoA + H(+). It functions in the pathway amino-acid biosynthesis; L-leucine biosynthesis; L-leucine from 3-methyl-2-oxobutanoate: step 1/4. Its function is as follows. Catalyzes the condensation of the acetyl group of acetyl-CoA with 3-methyl-2-oxobutanoate (2-ketoisovalerate) to form 3-carboxy-3-hydroxy-4-methylpentanoate (2-isopropylmalate). This Geobacillus sp. (strain WCH70) protein is 2-isopropylmalate synthase.